The chain runs to 280 residues: MSTIDHLPPLRSVIRDHDLSARKSMGQNFLLDLNLTAKIARQAGDLSACDVLEIGPGPGGLTRGLLAQGARRVLAIEKDARCLPALAEIAAVYPGRLEVMNGDALEIDPLSALTPPIRVAANLPYNVGTELLVRWLTPQIWPPYWQSLTLMFQREVAERIVARPGSKAYGRLAILAQWRADARIVMQLPPDAFTPPPKVSSSVVQITALPAPRYPADPYVLSKVVAMAFNQRRKMLRAALKGLGPDIEDRLLAAGIEPTERAERVSLEGFCALARAVAAT.

S-adenosyl-L-methionine-binding residues include Asn28, Leu30, Gly55, Glu77, Asp103, and Asn122.

It belongs to the class I-like SAM-binding methyltransferase superfamily. rRNA adenine N(6)-methyltransferase family. RsmA subfamily.

Its subcellular location is the cytoplasm. It carries out the reaction adenosine(1518)/adenosine(1519) in 16S rRNA + 4 S-adenosyl-L-methionine = N(6)-dimethyladenosine(1518)/N(6)-dimethyladenosine(1519) in 16S rRNA + 4 S-adenosyl-L-homocysteine + 4 H(+). In terms of biological role, specifically dimethylates two adjacent adenosines (A1518 and A1519) in the loop of a conserved hairpin near the 3'-end of 16S rRNA in the 30S particle. May play a critical role in biogenesis of 30S subunits. This Roseobacter denitrificans (strain ATCC 33942 / OCh 114) (Erythrobacter sp. (strain OCh 114)) protein is Ribosomal RNA small subunit methyltransferase A.